A 216-amino-acid polypeptide reads, in one-letter code: ATP phosphoribosyltransferase (216 aa).

The protein belongs to the ATP phosphoribosyltransferase family. Short subfamily. In terms of assembly, heteromultimer composed of HisG and HisZ subunits.

It localises to the cytoplasm. The catalysed reaction is 1-(5-phospho-beta-D-ribosyl)-ATP + diphosphate = 5-phospho-alpha-D-ribose 1-diphosphate + ATP. It participates in amino-acid biosynthesis; L-histidine biosynthesis; L-histidine from 5-phospho-alpha-D-ribose 1-diphosphate: step 1/9. Catalyzes the condensation of ATP and 5-phosphoribose 1-diphosphate to form N'-(5'-phosphoribosyl)-ATP (PR-ATP). Has a crucial role in the pathway because the rate of histidine biosynthesis seems to be controlled primarily by regulation of HisG enzymatic activity. This is ATP phosphoribosyltransferase from Nitrosomonas europaea (strain ATCC 19718 / CIP 103999 / KCTC 2705 / NBRC 14298).